The following is a 446-amino-acid chain: Lysine histidine transporter 1 (446 aa).

Residues 1 to 37 (MVAQAPHDDHQDDEKLAAARQKEIEDWLPITSSRNAK) are Cytoplasmic-facing. Residues 38-58 (WWYSAFHNVTAMVGAGVLGLP) traverse the membrane as a helical segment. The Extracellular segment spans residues 59–63 (YAMSQ). The chain crosses the membrane as a helical span at residues 64 to 84 (LGWGPGIAVLVLSWVITLYTL). Residues 85 to 115 (WQMVEMHEMVPGKRFDRYHELGQHAFGEKLG) lie on the Cytoplasmic side of the membrane. Residues 116-136 (LYIVVPQQLIVEIGVCIVYMV) form a helical membrane-spanning segment. Residues 137 to 157 (TGGKSLKKFHELVCDDCKPIK) lie on the Extracellular side of the membrane. The helical transmembrane segment at 158–178 (LTYFIMIFASVHFVLSHLPNF) threads the bilayer. The Cytoplasmic segment spans residues 179–180 (NS). A helical transmembrane segment spans residues 181-201 (ISGVSLAAAVMSLSYSTIAWA). Residues 202–227 (SSASKGVQEDVQYGYKAKTTAGTVFN) are Extracellular-facing. Residues 228–248 (FFSGLGDVAFAYAGHNVVLEI) traverse the membrane as a helical segment. Over 249–268 (QATIPSTPEKPSKGPMWRGV) the chain is Cytoplasmic. Residues 269-289 (IVAYIVVALCYFPVALVGYYI) form a helical membrane-spanning segment. At 290–305 (FGNGVEDNILMSLKKP) the chain is on the extracellular side. A helical transmembrane segment spans residues 306-326 (AWLIATANIFVVIHVIGSYQI). At 327 to 352 (YAMPVFDMMETLLVKKLNFRPTTTLR) the chain is on the cytoplasmic side. The chain crosses the membrane as a helical span at residues 353 to 375 (FFVRNFYVAATMFVGMTFPFFGG). Topologically, residues 376–378 (LLA) are extracellular. Residues 379-401 (FFGGFAFAPTTYFLPCVIWLAIY) traverse the membrane as a helical segment. The Cytoplasmic segment spans residues 402–409 (KPKKYSLS). Residues 410 to 430 (WWANWVCIVFGLFLMVLSPIG) form a helical membrane-spanning segment. The Extracellular portion of the chain corresponds to 431-446 (GLRTIVIQAKGYKFYS).

Belongs to the amino acid/polyamine transporter 2 family. Amino acid/auxin permease (AAAP) (TC 2.A.18.2) subfamily. In terms of tissue distribution, expressed in roots, stems, flowers, leaves, siliques and pollen. Found in the tips of roots and in the rhizodermis of emerging roots and in lateral roots. Higher expression in older leaves as compared to joung leaves. Detected first at the hydathodes, then in the epidermis and finally in matures leaves in all mesophyll cells. Not detected in vascular bundles or in seeds.

Its subcellular location is the cell membrane. With respect to regulation, inhibited by carbonlycyanide m-chlorophenylhydrazone (CCCP) and DEPC. In terms of biological role, amino acid-proton symporter. Transporter with a broad specificity for histidine, lysine, glutamic acid, alanine, serine, proline and glycine. Involved in both apoplastic transport of amino acids in leaves and their uptake by roots. The sequence is that of Lysine histidine transporter 1 (LHT1) from Arabidopsis thaliana (Mouse-ear cress).